We begin with the raw amino-acid sequence, 206 residues long: Homoserine/homoserine lactone efflux protein (206 aa).

6 helical membrane passes run 5–25 (WWFA…SGAI), 45–65 (GLQT…GTLF), 68–88 (SVIA…WLGI), 117–137 (FVNL…PQFI), 148–168 (IVLG…YATL), and 182–202 (MKAL…LLAS).

The protein belongs to the Rht family.

Its subcellular location is the cell membrane. Functionally, conducts the efflux of homoserine and homoserine lactone. In Escherichia coli O157:H7, this protein is Homoserine/homoserine lactone efflux protein (rhtB).